A 226-amino-acid chain; its full sequence is Cytidylate kinase (226 aa).

10-18 is a binding site for ATP; sequence GPASSGKST.

It belongs to the cytidylate kinase family. Type 1 subfamily.

It is found in the cytoplasm. The catalysed reaction is CMP + ATP = CDP + ADP. It catalyses the reaction dCMP + ATP = dCDP + ADP. The chain is Cytidylate kinase from Streptococcus pyogenes serotype M4 (strain MGAS10750).